The following is a 441-amino-acid chain: Monodehydroascorbate reductase 3 (441 aa).

FAD is bound by residues 14 to 17 (GGVA), Glu-41, Arg-48, Lys-53, Ile-96, and 147 to 148 (RE). Residues 173–179 (GGFLGLE), Glu-197, Arg-203, and Gly-262 contribute to the NAD(+) site. 175–179 (FLGLE) provides a ligand contact to NADP(+). Residues Arg-203 and Gly-262 each coordinate NADP(+). Asp-299 provides a ligand contact to FAD. An NAD(+)-binding site is contributed by 315-316 (EH). Residue 315 to 316 (EH) participates in NADP(+) binding. Arg-321 serves as a coordination point for L-ascorbate. Tyr-350 lines the FAD pocket. An NAD(+)-binding site is contributed by Tyr-350. Residue Tyr-350 participates in NADP(+) binding. Arg-352 contributes to the L-ascorbate binding site. Phosphoserine is present on Ser-418.

This sequence belongs to the FAD-dependent oxidoreductase family. It depends on FAD as a cofactor.

Its subcellular location is the cytoplasm. It carries out the reaction 2 monodehydro-L-ascorbate radical + NADH + H(+) = 2 L-ascorbate + NAD(+). In terms of biological role, catalyzes the conversion of monodehydroascorbate to ascorbate, oxidizing NADH in the process. Required for producing sufficient ascorbate to maintain the interaction between Piriformospora indica and Arabidopsis in a mutualistic state. In Arabidopsis thaliana (Mouse-ear cress), this protein is Monodehydroascorbate reductase 3.